Here is a 187-residue protein sequence, read N- to C-terminus: Nicotinamide-nucleotide adenylyltransferase (187 aa).

It belongs to the archaeal NMN adenylyltransferase family.

Its subcellular location is the cytoplasm. The catalysed reaction is beta-nicotinamide D-ribonucleotide + ATP + H(+) = diphosphate + NAD(+). Its pathway is cofactor biosynthesis; NAD(+) biosynthesis; NAD(+) from nicotinamide D-ribonucleotide: step 1/1. This Thermococcus onnurineus (strain NA1) protein is Nicotinamide-nucleotide adenylyltransferase.